Reading from the N-terminus, the 268-residue chain is GTP cyclohydrolase FolE2 (268 aa).

It belongs to the GTP cyclohydrolase IV family.

The catalysed reaction is GTP + H2O = 7,8-dihydroneopterin 3'-triphosphate + formate + H(+). Its pathway is cofactor biosynthesis; 7,8-dihydroneopterin triphosphate biosynthesis; 7,8-dihydroneopterin triphosphate from GTP: step 1/1. Its function is as follows. Converts GTP to 7,8-dihydroneopterin triphosphate. The chain is GTP cyclohydrolase FolE2 from Methylococcus capsulatus (strain ATCC 33009 / NCIMB 11132 / Bath).